The following is a 1088-amino-acid chain: DNA-directed RNA polymerase subunit beta (1088 aa).

The protein belongs to the RNA polymerase beta chain family. In plastids the minimal PEP RNA polymerase catalytic core is composed of four subunits: alpha, beta, beta', and beta''. When a (nuclear-encoded) sigma factor is associated with the core the holoenzyme is formed, which can initiate transcription.

The protein localises to the plastid. Its subcellular location is the chloroplast. The enzyme catalyses RNA(n) + a ribonucleoside 5'-triphosphate = RNA(n+1) + diphosphate. Its function is as follows. DNA-dependent RNA polymerase catalyzes the transcription of DNA into RNA using the four ribonucleoside triphosphates as substrates. This chain is DNA-directed RNA polymerase subunit beta, found in Ostreococcus tauri.